The sequence spans 299 residues: tRNA dimethylallyltransferase (299 aa).

13-20 (GPTASGKT) serves as a coordination point for ATP. 15–20 (TASGKT) is a binding site for substrate. The segment at 38 to 41 (DSRQ) is interaction with substrate tRNA.

The protein belongs to the IPP transferase family. In terms of assembly, monomer. Mg(2+) serves as cofactor.

It catalyses the reaction adenosine(37) in tRNA + dimethylallyl diphosphate = N(6)-dimethylallyladenosine(37) in tRNA + diphosphate. In terms of biological role, catalyzes the transfer of a dimethylallyl group onto the adenine at position 37 in tRNAs that read codons beginning with uridine, leading to the formation of N6-(dimethylallyl)adenosine (i(6)A). This chain is tRNA dimethylallyltransferase, found in Prochlorococcus marinus (strain MIT 9211).